Consider the following 348-residue polypeptide: Heat-inducible transcription repressor HrcA (348 aa).

The protein belongs to the HrcA family.

Functionally, negative regulator of class I heat shock genes (grpE-dnaK-dnaJ and groELS operons). Prevents heat-shock induction of these operons. The protein is Heat-inducible transcription repressor HrcA of Thermodesulfovibrio yellowstonii (strain ATCC 51303 / DSM 11347 / YP87).